Here is a 379-residue protein sequence, read N- to C-terminus: Pathogen-associated molecular patterns-induced protein A70 (379 aa).

Residues 7 to 29 (VASFFTPTTLFLLLNLMIGTIVV) traverse the membrane as a helical segment. N-linked (GlcNAc...) asparagine glycosylation is present at asparagine 122. Positions 133–154 (TGSDPHSHSHSHLDLHPDPAPA) are disordered. Residues 137–149 (PHSHSHSHLDLHP) show a composition bias toward basic and acidic residues. Residue asparagine 170 is glycosylated (N-linked (GlcNAc...) asparagine). 2 disordered regions span residues 216-238 (PEED…LTRA) and 256-347 (SDPD…DGVD). Positions 221–231 (PTGTGVNSQIN) are enriched in polar residues. Basic and acidic residues-rich tracts occupy residues 256-285 (SDPD…ESKK) and 322-335 (SLER…RVER).

It localises to the membrane. This chain is Pathogen-associated molecular patterns-induced protein A70, found in Arabidopsis thaliana (Mouse-ear cress).